The following is a 291-amino-acid chain: Probable ABC transporter permease protein PH1038 (291 aa).

A run of 8 helical transmembrane segments spans residues 7–27 (PFFFLLPALTLMVPFVIYPVF), 75–95 (IVWIAIHLPTTIFLGLGFALL), 106–126 (IIKSIIFLGMVIPMVVGGLII), 133–153 (GAGVIPAFFKLIGIEKLAITW), 160–180 (ALFSVILGSIWIWTGFSMLMY), 208–228 (FVIWPLLRPITVVIVAMTLLW), 232–252 (IFDIVYVATGGGPGGASMVLA), and 267–287 (YAAVVAVLLTALTFIPALWLI). The region spanning 71 to 286 (LIHNIVWIAI…ALTFIPALWL (216 aa)) is the ABC transmembrane type-1 domain.

The protein belongs to the binding-protein-dependent transport system permease family. MalFG subfamily.

It is found in the cell membrane. Functionally, probably part of a binding-protein-dependent transport system PH1036/38/39. Probably responsible for the translocation of the substrate across the membrane. This chain is Probable ABC transporter permease protein PH1038, found in Pyrococcus horikoshii (strain ATCC 700860 / DSM 12428 / JCM 9974 / NBRC 100139 / OT-3).